The chain runs to 278 residues: Rhomboid protease GlpG (278 aa).

The next 6 membrane-spanning stretches (helical) occupy residues 95 to 115, 143 to 163, 170 to 190, 192 to 212, 224 to 241, and 245 to 267; these read GPLTLSVMVLCIAIYILMQIV, AFLHFSLLHILFNLMWWWYLA, LGTGKLLVLTIVSALFSGWGQ, LFSGVNFGGLSGVVYALMGYV, ISLPRGLMAFSVLWLVAG, and ILGLSIANAAHVSGLIIGLLMAF. Ser-202 (nucleophile) is an active-site residue. His-255 is a catalytic residue.

The protein belongs to the peptidase S54 family.

Its subcellular location is the cell inner membrane. It carries out the reaction Cleaves type-1 transmembrane domains using a catalytic dyad composed of serine and histidine that are contributed by different transmembrane domains.. In terms of biological role, rhomboid-type serine protease that catalyzes intramembrane proteolysis. This Yersinia enterocolitica serotype O:8 / biotype 1B (strain NCTC 13174 / 8081) protein is Rhomboid protease GlpG.